We begin with the raw amino-acid sequence, 193 residues long: Holliday junction branch migration complex subunit RuvA (193 aa).

Positions 1–64 are domain I; the sequence is MIGRIAGILL…EDAHLLYGFL (64 aa). Residues 65 to 139 form a domain II region; that stretch reads TQQERTTFRE…GKLGADLGAL (75 aa). The interval 139–143 is flexible linker; the sequence is LAGAA. The interval 144 to 193 is domain III; the sequence is SPSDHATDILNALLALGYSEKEGLAAIKNVPAGTGVSEGIKLALKALSKA.

The protein belongs to the RuvA family. As to quaternary structure, homotetramer. Forms an RuvA(8)-RuvB(12)-Holliday junction (HJ) complex. HJ DNA is sandwiched between 2 RuvA tetramers; dsDNA enters through RuvA and exits via RuvB. An RuvB hexamer assembles on each DNA strand where it exits the tetramer. Each RuvB hexamer is contacted by two RuvA subunits (via domain III) on 2 adjacent RuvB subunits; this complex drives branch migration. In the full resolvosome a probable DNA-RuvA(4)-RuvB(12)-RuvC(2) complex forms which resolves the HJ.

The protein resides in the cytoplasm. Its function is as follows. The RuvA-RuvB-RuvC complex processes Holliday junction (HJ) DNA during genetic recombination and DNA repair, while the RuvA-RuvB complex plays an important role in the rescue of blocked DNA replication forks via replication fork reversal (RFR). RuvA specifically binds to HJ cruciform DNA, conferring on it an open structure. The RuvB hexamer acts as an ATP-dependent pump, pulling dsDNA into and through the RuvAB complex. HJ branch migration allows RuvC to scan DNA until it finds its consensus sequence, where it cleaves and resolves the cruciform DNA. The chain is Holliday junction branch migration complex subunit RuvA from Burkholderia cenocepacia (strain ATCC BAA-245 / DSM 16553 / LMG 16656 / NCTC 13227 / J2315 / CF5610) (Burkholderia cepacia (strain J2315)).